Here is a 419-residue protein sequence, read N- to C-terminus: L-rhamnose isomerase (419 aa).

Mn(2+)-binding residues include His262, Asp294, and Asp296.

It belongs to the rhamnose isomerase family. In terms of assembly, homotetramer. The cofactor is Mn(2+).

It localises to the cytoplasm. The enzyme catalyses L-rhamnopyranose = L-rhamnulose. The protein operates within carbohydrate degradation; L-rhamnose degradation; glycerone phosphate from L-rhamnose: step 1/3. Its function is as follows. Catalyzes the interconversion of L-rhamnose and L-rhamnulose. This Escherichia coli O17:K52:H18 (strain UMN026 / ExPEC) protein is L-rhamnose isomerase.